The chain runs to 833 residues: Serine-rich coiled-coil domain-containing protein 2 (833 aa).

The tract at residues 178–208 (NRSSGNVQKPRVNSCASRSSSGESLAQSPDN) is disordered. Polar residues predominate over residues 191–208 (SCASRSSSGESLAQSPDN). A Phosphoserine modification is found at Ser222. 4 disordered regions span residues 321–345 (LLKS…PADM), 424–452 (NRTR…FDSP), 478–508 (KHTS…SSDG), and 602–631 (DHYH…ESPL). Position 451 is a phosphoserine (Ser451). A compositionally biased stretch (low complexity) spans 496–506 (SSFELSPSDSS). A compositionally biased stretch (basic residues) spans 606–615 (LSHPGHYHHH). Residues 711-747 (DQIYKNEDLLNEITQLKEEIKKKDEKIQLLEQQLATR) are a coiled coil. The interval 789–833 (FQGMPRTVPPHRRQTSSTTAFQQPSQIYRPRPGKTNKATTYRGPQ) is disordered. Polar residues predominate over residues 803-814 (TSSTTAFQQPSQ).

This sequence belongs to the CCSER family. As to expression, expressed in brain (at protein level).

Its subcellular location is the cytoplasm. It is found in the cytoskeleton. In terms of biological role, microtubule-binding protein which might play a role in microtubule bundling. The polypeptide is Serine-rich coiled-coil domain-containing protein 2 (Ccser2) (Mus musculus (Mouse)).